The primary structure comprises 230 residues: Transcription factor bHLH147 (230 aa).

A compositionally biased stretch (polar residues) spans 1 to 17 (MESISPVSNQLLQPTTT). The segment at 1–52 (MESISPVSNQLLQPTTTSSNSDRSRRKRKKKSSPSSVEKSPSPSISLEKWRS) is disordered. The segment covering 33–46 (SPSSVEKSPSPSIS) has biased composition (low complexity). The 50-residue stretch at 147–196 (KQRATVLRLKAKGLPAVQRKVKVLSRLVPGCRKQSLPVVLEETTDYIAAM) folds into the bHLH domain. The segment at 210-230 (VSSSPPPPTPGHEGGQTHMLG) is disordered.

In terms of assembly, homodimer. Interacts with PRE3.

Its subcellular location is the nucleus. Atypical bHLH transcription factor probably unable to bind DNA. Negatively regulates brassinosteroid signaling. In Arabidopsis thaliana (Mouse-ear cress), this protein is Transcription factor bHLH147 (BHLH147).